The chain runs to 203 residues: Probable Tat proofreading chaperone DmsD (203 aa).

It belongs to the TorD/DmsD family. DmsD subfamily.

Functionally, required for biogenesis/assembly of DMSO reductase, but not for the interaction of the DmsA signal peptide with the Tat system. May be part of a chaperone cascade complex that facilitates a folding-maturation pathway for the substrate protein. The sequence is that of Probable Tat proofreading chaperone DmsD from Haemophilus influenzae (strain ATCC 51907 / DSM 11121 / KW20 / Rd).